Consider the following 187-residue polypeptide: Elongation factor P (187 aa).

Belongs to the elongation factor P family.

It is found in the cytoplasm. It functions in the pathway protein biosynthesis; polypeptide chain elongation. Functionally, involved in peptide bond synthesis. Stimulates efficient translation and peptide-bond synthesis on native or reconstituted 70S ribosomes in vitro. Probably functions indirectly by altering the affinity of the ribosome for aminoacyl-tRNA, thus increasing their reactivity as acceptors for peptidyl transferase. The protein is Elongation factor P of Parvibaculum lavamentivorans (strain DS-1 / DSM 13023 / NCIMB 13966).